The primary structure comprises 780 residues: Tyrosine-protein phosphatase non-receptor type 12 (780 aa).

The residue at position 1 (Met1) is an N-acetylmethionine. Ser19 carries the phosphoserine modification. One can recognise a Tyrosine-protein phosphatase domain in the interval 28–293 (FARDFMRLRR…ELVHRAIAQL (266 aa)). Residues Arg36, 63–67 (RYKDI), Asp199, 231–237 (CSAGCGR), and Gln278 each bind substrate. Cys231 (phosphocysteine intermediate) is an active-site residue. Ser332, Ser435, Ser449, and Ser468 each carry phosphoserine. The interval 345–438 (VEGDAKEEIL…KLERNLSFEI (94 aa)) is interaction with TGFB1I1. Polar residues predominate over residues 502-519 (QSNKVSVTPPEESQNSDT). Disordered stretches follow at residues 502–639 (QSNK…STES), 657–725 (GTTH…EKCD), and 744–780 (SDKR…SEWT). Phosphothreonine occurs at positions 509 and 519. Basic and acidic residues predominate over residues 521–533 (PRPDRLPLDEKGH). Polar residues-rich tracts occupy residues 552 to 577 (EGNS…TQVE) and 587 to 601 (TSPL…TNPL). Phosphoserine is present on Ser567. Position 569 is a phosphothreonine (Thr569). A phosphoserine mark is found at Ser571 and Ser596. Position 598 is a phosphothreonine (Thr598). The span at 602-613 (HSDDSDSDERNS) shows a compositional bias: basic and acidic residues. 4 positions are modified to phosphoserine: Ser603, Ser606, Ser608, and Ser613. The segment covering 622–639 (TNISTASATVSAATSTES) has biased composition (low complexity). Residues Ser673 and Ser689 each carry the phosphoserine modification. Residues 690–703 (EHNTPVRSEWSELQ) show a composition bias toward polar residues. The residue at position 693 (Thr693) is a Phosphothreonine. 2 stretches are compositionally biased toward basic and acidic residues: residues 704–725 (SQER…EKCD) and 771–780 (GPRDPPSEWT).

Belongs to the protein-tyrosine phosphatase family. Non-receptor class 4 subfamily. Interacts with TGFB1I1. Interacts with PSTPIP1. Interacts with PTK2B/PYK2. Interacts with LPXN. Interacts with SORBS2; this interaction greatly enhances WASF1 dephosphorylation and might mediate partial translocation to focal adhesion sites. Phosphorylated by STK24/MST3 and this results in inhibition of its activity.

It is found in the cytoplasm. Its subcellular location is the cell junction. The protein localises to the focal adhesion. The protein resides in the cell projection. It localises to the podosome. The enzyme catalyses O-phospho-L-tyrosyl-[protein] + H2O = L-tyrosyl-[protein] + phosphate. Dephosphorylates a range of proteins, and thereby regulates cellular signaling cascades. Dephosphorylates cellular tyrosine kinases, such as ERBB2 and PTK2B/PYK2, and thereby regulates signaling via ERBB2 and PTK2B/PYK2. Selectively dephosphorylates ERBB2 phosphorylated at 'Tyr-1112', 'Tyr-1196', and/or 'Tyr-1248'. The protein is Tyrosine-protein phosphatase non-receptor type 12 (PTPN12) of Homo sapiens (Human).